The primary structure comprises 729 residues: Serine/threonine-protein kinase TBK1 (729 aa).

The region spanning tryptophan 9–valine 310 is the Protein kinase domain. Position 15-23 (leucine 15–valine 23) interacts with ATP. A Glycyl lysine isopeptide (Lys-Gly) (interchain with G-Cter in ubiquitin) cross-link involves residue lysine 30. Residue lysine 38 coordinates ATP. The active-site Proton acceptor is the aspartate 135. Residue serine 172 is modified to Phosphoserine; by autocatalysis and IKKB. The 77-residue stretch at methionine 309–glutamate 385 folds into the Ubiquitin-like domain. Residue lysine 401 forms a Glycyl lysine isopeptide (Lys-Gly) (interchain with G-Cter in ubiquitin) linkage. Coiled coils occupy residues aspartate 407–threonine 657 and leucine 658–arginine 713. An interaction with AZI2, TANK and TBKBP1 region spans residues arginine 621–leucine 729. Lysine 670 is covalently cross-linked (Glycyl lysine isopeptide (Lys-Gly) (interchain with G-Cter in ubiquitin)). Serine 716 bears the Phosphoserine mark.

It belongs to the protein kinase superfamily. Ser/Thr protein kinase family. I-kappa-B kinase subfamily. Homodimer. Interacts with DDX3X, TIRAP and TRAF2. Part of a ternary complex consisting of TANK, TRAF2 and TBK1. Interacts with AZI2, TANK and TBKBP1; these interactions are mutually exclusive and mediate TBK1 activation. Interacts with GSK3B; this interaction promotes TBK1 self-association and autophosphorylation. Interacts with SIKE1; SIKE1 is associated with TBK1 under physiological condition and dissociated from TBK1 upon viral infection or TLR3 stimulation. Interacts with IRF3, leading to IRF3 phosphorylation. Interacts with RIGI. Interacts with CYLD. Interacts with OPTN and TRAF3. Interacts with SRC. Interacts with the exocyst complex subunit SEC5/EXOC2; this interaction is sufficient to trigger TBK1 activity. Interacts with STING1, leading to STING1 phosphorylation. Interacts with IFIT3 (via N-terminus). Interacts with MAVS; interaction only takes place in the presence of IFIT3 and leads to MAVS phosphorylation. Interacts (via protein kinase domain) with TTLL12 (via TTL domain); the interaction prevents MAVS binding to TBK1. Interacts with TICAM1; this interaction is enhanced in the presence of WDFY1 and leads to TICAM1 phosphorylation. Interacts with TRIM26. Interacts with TRIM23. Interacts with TTC4 and IKBKE. Interacts with HNRNPA2B1. Interacts with DDX3X. Interacts with TRIM14. Interacts with CEP170; efficient complex formation may be dependent on the presence of CCDC61. Interacts with TRAF3IP3. Interacts with HSP90AA1; the interaction mediates TBK1 association with TOMM70. Interacts with TAX1BP1. Interacts with kinase IKBKB; the complex interacts with STAT1, leading to phosphorylation of STAT1 on 'Thr-748' by IKBKB. Interacts with ICOS; this interaction is critical for the maturation of T follicular regulatory cells. Interacts with RNF144B; this interaction prevents TBK1 phosphorylation and subsequent activation. Interacts with ASB8; this interaction promotes TBK1 proteasomal degradation. Post-translationally, autophosphorylation at Ser-172 activates the kinase, and is an essential step for virus-triggered signaling. Phosphorylated by IKBKB/IKKB at Ser-172. Phosphorylation requires homodimerization and ubiquitination at Lys-30 and Lys-401. Dephosphorylated at Ser-172 by PPM1B and this negatively regulates its role in mediating antiviral response. In terms of processing, 'Lys-63'-linked polyubiquitination by MIB1 after RNA virus infection, or by NRDP1 after LPS stimulation at Lys-30 and Lys-401, participates in kinase activation. 'Lys-48'-linked polyubiquitination at Lys-670 by DTX4 leads to proteasomal degradation. 'Lys-48'-linked polyubiquitination by TRAIP also leads to proteasomal degradation. 'Lys-48'-linked polyubiquitination by TRAF7; leading to proteasomal degradation. 'Lys-63'-linked polyubiquitination by RNF128 at Lys-30 and Lys-401 leads to the activation of antiviral responses. 'Lys-48'-linked polyubiquitination after 'lys-33'-linked deubiquitination by USP38 promotes TBK1 degradation.

The protein localises to the cytoplasm. The catalysed reaction is L-seryl-[protein] + ATP = O-phospho-L-seryl-[protein] + ADP + H(+). The enzyme catalyses L-threonyl-[protein] + ATP = O-phospho-L-threonyl-[protein] + ADP + H(+). With respect to regulation, kinase activity is inhibited competitively by amlexanox. Serine/threonine kinase that plays an essential role in regulating inflammatory responses to foreign agents. Following activation of toll-like receptors by viral or bacterial components, associates with TRAF3 and TANK and phosphorylates interferon regulatory factors (IRFs) IRF3 and IRF7 as well as DDX3X. This activity allows subsequent homodimerization and nuclear translocation of the IRFs leading to transcriptional activation of pro-inflammatory and antiviral genes including IFNA and IFNB. In order to establish such an antiviral state, TBK1 form several different complexes whose composition depends on the type of cell and cellular stimuli. Thus, several scaffolding molecules including FADD, TRADD, MAVS, AZI2, TANK or TBKBP1/SINTBAD can be recruited to the TBK1-containing-complexes. Plays a key role in IRF3 activation: acts by first phosphorylating innate adapter proteins MAVS, STING1 and TICAM1 on their pLxIS motif, leading to recruitment of IRF3, thereby licensing IRF3 for phosphorylation by TBK1. Under particular conditions, functions as a NF-kappa-B effector by phosphorylating NF-kappa-B inhibitor alpha/NFKBIA, IKBKB or RELA to translocate NF-Kappa-B to the nucleus. Restricts bacterial proliferation by phosphorylating the autophagy receptor OPTN/Optineurin on 'Ser-177', thus enhancing LC3 binding affinity and antibacterial autophagy. Phosphorylates SMCR8 component of the C9orf72-SMCR8 complex, promoting autophagosome maturation. Phosphorylates ATG8 proteins MAP1LC3C and GABARAPL2, thereby preventing their delipidation and premature removal from nascent autophagosomes. Seems to play a role in energy balance regulation by sustaining a state of chronic, low-grade inflammation in obesity, which leads to a negative impact on insulin sensitivity. Acts both as a positive and negative regulator of the mTORC1 complex, depending on the context: activates mTORC1 in response to growth factors by catalyzing phosphorylation of MTOR, while it limits the mTORC1 complex by promoting phosphorylation of RPTOR. Acts as a positive regulator of the mTORC2 complex by mediating phosphorylation of MTOR, leading to increased phosphorylation and activation of AKT1. Phosphorylates and activates AKT1. Involved in the regulation of TNF-induced RIPK1-mediated cell death, probably acting via CYLD phosphorylation that in turn controls RIPK1 ubiquitination status. Also participates in the differentiation of T follicular regulatory cells together with the receptor ICOS. This Mus musculus (Mouse) protein is Serine/threonine-protein kinase TBK1.